Consider the following 173-residue polypeptide: Ribosome maturation factor RimM (173 aa).

A PRC barrel domain is found at 95-169; sequence EGSYYFKDIL…RIEVTLLEGL (75 aa).

Belongs to the RimM family. As to quaternary structure, binds ribosomal protein uS19.

It localises to the cytoplasm. Its function is as follows. An accessory protein needed during the final step in the assembly of 30S ribosomal subunit, possibly for assembly of the head region. Essential for efficient processing of 16S rRNA. May be needed both before and after RbfA during the maturation of 16S rRNA. It has affinity for free ribosomal 30S subunits but not for 70S ribosomes. The sequence is that of Ribosome maturation factor RimM from Lactobacillus johnsonii (strain CNCM I-12250 / La1 / NCC 533).